A 189-amino-acid chain; its full sequence is Endoribonuclease YbeY (189 aa).

The segment covering 1–10 (MKERSSSPGT) has biased composition (polar residues). The disordered stretch occupies residues 1–23 (MKERSSSPGTPDSGRRARPKPAK). Zn(2+) is bound by residues His-141, His-145, and His-151.

It belongs to the endoribonuclease YbeY family. Requires Zn(2+) as cofactor.

It is found in the cytoplasm. Functionally, single strand-specific metallo-endoribonuclease involved in late-stage 70S ribosome quality control and in maturation of the 3' terminus of the 16S rRNA. This is Endoribonuclease YbeY from Nitrosospira multiformis (strain ATCC 25196 / NCIMB 11849 / C 71).